Here is a 252-residue protein sequence, read N- to C-terminus: NAC domain-containing protein 23 (252 aa).

The NAC domain maps to 12–177 (MPPGFRFQPT…EMVLCRISNK (166 aa)). A DNA-binding region spans residues 110-183 (TAVKRRFVFY…ISNKDLPKPP (74 aa)). The interval 225-252 (VDDAAAADDDPGDLDEEIDDSMQRNHGG) is disordered. Acidic residues predominate over residues 229 to 244 (AAADDDPGDLDEEIDD).

In terms of assembly, forms heterodimers with NAC26. Expressed in stems and panicles. Expressed in developing seeds.

It localises to the nucleus. It is found in the cytoplasm. Its function is as follows. Transcription factor involved in the regulation of seed size. Possesses transactivation activity in yeast. The protein is NAC domain-containing protein 23 of Oryza sativa subsp. indica (Rice).